We begin with the raw amino-acid sequence, 148 residues long: Putative adenylate kinase (148 aa).

ATP-binding residues include glycine 9, glycine 11, lysine 12, serine 13, and threonine 14. An NMP region spans residues 28–44 (EGNALAVKYGCLSGDEV). An LID region spans residues 91–101 (DRGYSPEKIDE). Arginine 92 is a binding site for ATP.

The protein belongs to the adenylate kinase family. AK6 subfamily. Interacts with uS11. Not a structural component of 40S pre-ribosomes, but transiently interacts with them by binding to uS11.

It carries out the reaction AMP + ATP = 2 ADP. It catalyses the reaction ATP + H2O = ADP + phosphate + H(+). Functionally, broad-specificity nucleoside monophosphate (NMP) kinase that catalyzes the reversible transfer of the terminal phosphate group between nucleoside triphosphates and monophosphates. Also has ATPase activity. Involved in the late maturation steps of the 30S ribosomal particles, specifically 16S rRNA maturation. While NMP activity is not required for ribosome maturation, ATPase activity is. Associates transiently with small ribosomal subunit protein uS11. ATP hydrolysis breaks the interaction with uS11. May temporarily remove uS11 from the ribosome to enable a conformational change of the ribosomal RNA that is needed for the final maturation step of the small ribosomal subunit. The protein is Putative adenylate kinase of Thermoplasma acidophilum (strain ATCC 25905 / DSM 1728 / JCM 9062 / NBRC 15155 / AMRC-C165).